The sequence spans 138 residues: Small ribosomal subunit protein uS11c (138 aa).

It belongs to the universal ribosomal protein uS11 family. Part of the 30S ribosomal subunit.

It localises to the plastid. The protein localises to the chloroplast. The chain is Small ribosomal subunit protein uS11c from Nandina domestica (Heavenly bamboo).